A 156-amino-acid polypeptide reads, in one-letter code: Small ribosomal subunit protein uS7 (156 aa).

Belongs to the universal ribosomal protein uS7 family. In terms of assembly, part of the 30S ribosomal subunit. Contacts proteins S9 and S11.

In terms of biological role, one of the primary rRNA binding proteins, it binds directly to 16S rRNA where it nucleates assembly of the head domain of the 30S subunit. Is located at the subunit interface close to the decoding center, probably blocks exit of the E-site tRNA. This is Small ribosomal subunit protein uS7 from Geotalea daltonii (strain DSM 22248 / JCM 15807 / FRC-32) (Geobacter daltonii).